We begin with the raw amino-acid sequence, 343 residues long: Protein RecA (343 aa).

64 to 71 (GPESSGKT) serves as a coordination point for ATP.

It belongs to the RecA family.

The protein resides in the cytoplasm. Functionally, can catalyze the hydrolysis of ATP in the presence of single-stranded DNA, the ATP-dependent uptake of single-stranded DNA by duplex DNA, and the ATP-dependent hybridization of homologous single-stranded DNAs. It interacts with LexA causing its activation and leading to its autocatalytic cleavage. In Bacillus cereus (strain B4264), this protein is Protein RecA.